Reading from the N-terminus, the 254-residue chain is Ribosomal RNA small subunit methyltransferase G (254 aa).

Residues Gly84, Phe89, Val136–Glu137, and Arg155 each bind S-adenosyl-L-methionine. Residues His231–Ser254 are disordered.

The protein belongs to the methyltransferase superfamily. RNA methyltransferase RsmG family.

It is found in the cytoplasm. Specifically methylates the N7 position of a guanine in 16S rRNA. The sequence is that of Ribosomal RNA small subunit methyltransferase G from Synechococcus sp. (strain WH7803).